A 372-amino-acid chain; its full sequence is MKPFPRAEISRYALQSNLAQLRLIAPNSKIMAVVKANGYGHGLLNVAECVGLLNYVESVCKYHGGADGFGLARLEEALQLREGGVKGKLLLLEGFFRQSDLPTLVSHNIDTVVHHESQLQMLETIALDKPVTVWIKIDTGMHRIGFSLEQFNSIYQRLLACPQVAKPIHLMTHFACADEPDNPLTQTQMNAFEQQVSGLEGDRTLANSAGTLFWPTSQADWVRPGIALYGVSPVVGDRGVNHRLIPAMELVSNLIAVREHKAGDSVGYGASWTAKKDTRLGVVAIGYGDGYPRNAPEGTPVWINGRRVPIVGRVSMDMLTVDLGADAQDNVGDSVQLWGKALAVEEVAEHIGTIAYELVTKLTPRVVVELLD.

K35 acts as the Proton acceptor; specific for D-alanine in catalysis. At K35 the chain carries N6-(pyridoxal phosphate)lysine. A substrate-binding site is contributed by R143. Y268 serves as the catalytic Proton acceptor; specific for L-alanine. M316 provides a ligand contact to substrate.

This sequence belongs to the alanine racemase family. The cofactor is pyridoxal 5'-phosphate.

The enzyme catalyses L-alanine = D-alanine. It functions in the pathway amino-acid biosynthesis; D-alanine biosynthesis; D-alanine from L-alanine: step 1/1. Its function is as follows. Catalyzes the interconversion of L-alanine and D-alanine. May also act on other amino acids. This is Alanine racemase (alr) from Shewanella frigidimarina (strain NCIMB 400).